The sequence spans 507 residues: Ribosomal protein uS12 methylthiotransferase RimO (507 aa).

Positions 13–124 constitute an MTTase N-terminal domain; that stretch reads RRVALLTLGC…ISDRLGAVLA (112 aa). Residues Cys22, Cys58, and Cys87 each contribute to the [4Fe-4S] cluster site. The tract at residues 150–175 is disordered; the sequence is AAVSLPGHGTRAAAAGPGGRSAPVEV. A compositionally biased stretch (low complexity) spans 155-172; that stretch reads PGHGTRAAAAGPGGRSAP. Residues 191 to 422 enclose the Radical SAM core domain; the sequence is LDTGPVASLK…ALADELCAQR (232 aa). The [4Fe-4S] cluster site is built by Cys205, Cys209, and Cys212. The region spanning 424-497 is the TRAM domain; sequence EQRLGSTVQV…GVDLVAVPDG (74 aa).

Belongs to the methylthiotransferase family. RimO subfamily. [4Fe-4S] cluster serves as cofactor.

Its subcellular location is the cytoplasm. The catalysed reaction is L-aspartate(89)-[ribosomal protein uS12]-hydrogen + (sulfur carrier)-SH + AH2 + 2 S-adenosyl-L-methionine = 3-methylsulfanyl-L-aspartate(89)-[ribosomal protein uS12]-hydrogen + (sulfur carrier)-H + 5'-deoxyadenosine + L-methionine + A + S-adenosyl-L-homocysteine + 2 H(+). Its function is as follows. Catalyzes the methylthiolation of an aspartic acid residue of ribosomal protein uS12. The sequence is that of Ribosomal protein uS12 methylthiotransferase RimO from Salinispora arenicola (strain CNS-205).